The following is a 380-amino-acid chain: MTTSTRGAAKVPAVLVLEDGRTFRGRAYGAVGVTFGEAVFSTGMTGYQETLTDPSYHRQVVVMTAPHVGNTGVNDEDPESKRIWVSGYVVRDPARVPSNWRSRRSLDEELRHQGVVGISGIDTRALTRHLRESGAMRVGIFSGSALPDEGTMLAEVRQAPEMKGANLAAEVATKETYVVPAIGAKRFTVAAVDLGIKGMTPHRMAERGIEVHVLPATATAEDVYAVNPDGVFFSNGPGDPATADGPVAVMREVLARKTPLFGICFGNQILGRALGFGTYKLKYGHRGINQPVQDRTTGKVEVTAHNHGFAVDAPLDQVSDTPYGRAEVSHVCLNDNVVEGLQLLDQPAFSVQYHPEAAAGPHDAAYLFDRFVSLMEGQRA.

Positions Met-1–Phe-187 are CPSase. L-glutamine is bound by residues Ser-55, Gly-236, and Gly-238. The Glutamine amidotransferase type-1 domain occupies Thr-188–Ala-380. The active-site Nucleophile is the Cys-264. Residues Phe-265, Gln-268, Asn-306, Gly-308, and Phe-309 each contribute to the L-glutamine site. Active-site residues include His-354 and Glu-356.

The protein belongs to the CarA family. As to quaternary structure, composed of two chains; the small (or glutamine) chain promotes the hydrolysis of glutamine to ammonia, which is used by the large (or ammonia) chain to synthesize carbamoyl phosphate. Tetramer of heterodimers (alpha,beta)4.

The catalysed reaction is hydrogencarbonate + L-glutamine + 2 ATP + H2O = carbamoyl phosphate + L-glutamate + 2 ADP + phosphate + 2 H(+). The enzyme catalyses L-glutamine + H2O = L-glutamate + NH4(+). It participates in amino-acid biosynthesis; L-arginine biosynthesis; carbamoyl phosphate from bicarbonate: step 1/1. The protein operates within pyrimidine metabolism; UMP biosynthesis via de novo pathway; (S)-dihydroorotate from bicarbonate: step 1/3. Its function is as follows. Small subunit of the glutamine-dependent carbamoyl phosphate synthetase (CPSase). CPSase catalyzes the formation of carbamoyl phosphate from the ammonia moiety of glutamine, carbonate, and phosphate donated by ATP, constituting the first step of 2 biosynthetic pathways, one leading to arginine and/or urea and the other to pyrimidine nucleotides. The small subunit (glutamine amidotransferase) binds and cleaves glutamine to supply the large subunit with the substrate ammonia. In Streptomyces avermitilis (strain ATCC 31267 / DSM 46492 / JCM 5070 / NBRC 14893 / NCIMB 12804 / NRRL 8165 / MA-4680), this protein is Carbamoyl phosphate synthase small chain.